Consider the following 199-residue polypeptide: MTKVRARIELSVGQHSNIPAEMLSFEGLETEKEHVAIVFNQADKTQKTPLVRMHSECLTGDVFHSSRCDCGEQLEESINKMAISGGIILYLRQEGRGIGLYNKLDAYELQSKGMNTYEANNHLGFGDDLRDFKEAAQMLGALNINTIKLVTNNPKKIKDIQDYGITLDEVVHTHAHVKKGNENYLQSKVDHGHQLDLDK.

Residue 52-56 (RMHSE) coordinates GTP. Residues Cys-57, Cys-68, and Cys-70 each contribute to the Zn(2+) site. Residues Gln-73, 94–96 (EGR), and Thr-116 each bind GTP. Residue Asp-128 is the Proton acceptor of the active site. The Nucleophile role is filled by Arg-130. Positions 151 and 156 each coordinate GTP.

This sequence belongs to the GTP cyclohydrolase II family. Requires Zn(2+) as cofactor.

It carries out the reaction GTP + 4 H2O = 2,5-diamino-6-hydroxy-4-(5-phosphoribosylamino)-pyrimidine + formate + 2 phosphate + 3 H(+). It functions in the pathway cofactor biosynthesis; riboflavin biosynthesis; 5-amino-6-(D-ribitylamino)uracil from GTP: step 1/4. In terms of biological role, catalyzes the conversion of GTP to 2,5-diamino-6-ribosylamino-4(3H)-pyrimidinone 5'-phosphate (DARP), formate and pyrophosphate. The chain is GTP cyclohydrolase-2 from Aliivibrio salmonicida (strain LFI1238) (Vibrio salmonicida (strain LFI1238)).